A 104-amino-acid polypeptide reads, in one-letter code: Large ribosomal subunit protein uL24 (104 aa).

It belongs to the universal ribosomal protein uL24 family. As to quaternary structure, part of the 50S ribosomal subunit.

Functionally, one of two assembly initiator proteins, it binds directly to the 5'-end of the 23S rRNA, where it nucleates assembly of the 50S subunit. Its function is as follows. One of the proteins that surrounds the polypeptide exit tunnel on the outside of the subunit. This is Large ribosomal subunit protein uL24 from Klebsiella pneumoniae (strain 342).